A 263-amino-acid polypeptide reads, in one-letter code: Small ribosomal subunit protein uS2 (263 aa).

S2 is modified (N-acetylserine). Over residues 211-242 (EQTAEEEAEAAEGAEFEVEEEEVEQEWQEPAE) the composition is skewed to acidic residues. The disordered stretch occupies residues 211–263 (EQTAEEEAEAAEGAEFEVEEEEVEQEWQEPAEADWNASAPPADWNDAANAEAF). Low complexity predominate over residues 246-263 (NASAPPADWNDAANAEAF).

Belongs to the universal ribosomal protein uS2 family. Component of the small ribosomal subunit. Mature ribosomes consist of a small (40S) and a large (60S) subunit. The 40S subunit contains about 33 different proteins and 1 molecule of RNA (18S). The 60S subunit contains about 49 different proteins and 3 molecules of RNA (25S, 5.8S and 5S). Interacts with RPS21.

It localises to the cytoplasm. Its function is as follows. Required for the assembly and/or stability of the 40S ribosomal subunit. Required for the processing of the 20S rRNA-precursor to mature 18S rRNA in a late step of the maturation of 40S ribosomal subunits. In Komagataella phaffii (strain GS115 / ATCC 20864) (Yeast), this protein is Small ribosomal subunit protein uS2.